We begin with the raw amino-acid sequence, 225 residues long: Uracil-DNA glycosylase (225 aa).

Residue Asp-65 is the Proton acceptor of the active site.

Belongs to the uracil-DNA glycosylase (UDG) superfamily. UNG family.

The protein localises to the cytoplasm. The catalysed reaction is Hydrolyzes single-stranded DNA or mismatched double-stranded DNA and polynucleotides, releasing free uracil.. Functionally, excises uracil residues from the DNA which can arise as a result of misincorporation of dUMP residues by DNA polymerase or due to deamination of cytosine. This Bacillus cereus (strain ATCC 10987 / NRS 248) protein is Uracil-DNA glycosylase.